The sequence spans 91 residues: Small ribosomal subunit protein bS16 (91 aa).

It belongs to the bacterial ribosomal protein bS16 family.

The chain is Small ribosomal subunit protein bS16 from Limosilactobacillus reuteri (strain DSM 20016) (Lactobacillus reuteri).